We begin with the raw amino-acid sequence, 223 residues long: Triosephosphate isomerase (223 aa).

10–12 (NFK) is a binding site for substrate. The Electrophile role is filled by His94. Residue Glu142 is the Proton acceptor of the active site. Substrate contacts are provided by residues Ile147, Gly182, and 203–204 (AS).

It belongs to the triosephosphate isomerase family. As to quaternary structure, homotetramer; dimer of dimers.

The protein localises to the cytoplasm. It carries out the reaction D-glyceraldehyde 3-phosphate = dihydroxyacetone phosphate. It participates in carbohydrate biosynthesis; gluconeogenesis. The protein operates within carbohydrate degradation; glycolysis; D-glyceraldehyde 3-phosphate from glycerone phosphate: step 1/1. Involved in the gluconeogenesis. Catalyzes stereospecifically the conversion of dihydroxyacetone phosphate (DHAP) to D-glyceraldehyde-3-phosphate (G3P). This is Triosephosphate isomerase from Archaeoglobus fulgidus (strain ATCC 49558 / DSM 4304 / JCM 9628 / NBRC 100126 / VC-16).